Reading from the N-terminus, the 61-residue chain is 2S seed storage albumin protein (61 aa).

It belongs to the 2S seed storage albumins family. The mature protein consists of a small and a large chain linked by 2 disulfide bonds.

This is a 2S seed storage protein. Inhibits cell-free protein synthesis. This chain is 2S seed storage albumin protein, found in Cucurbita moschata (Winter crookneck squash).